We begin with the raw amino-acid sequence, 592 residues long: Arginine--tRNA ligase (592 aa).

Positions 131–141 (ANPTGPMHVGH) match the 'HIGH' region motif.

The protein belongs to the class-I aminoacyl-tRNA synthetase family. In terms of assembly, monomer.

The protein resides in the cytoplasm. The enzyme catalyses tRNA(Arg) + L-arginine + ATP = L-arginyl-tRNA(Arg) + AMP + diphosphate. The polypeptide is Arginine--tRNA ligase (Rhodospirillum rubrum (strain ATCC 11170 / ATH 1.1.1 / DSM 467 / LMG 4362 / NCIMB 8255 / S1)).